The sequence spans 739 residues: DEAD-box ATP-dependent RNA helicase 32 (739 aa).

The short motif at 71–99 (RKFAQLPISDKTKRGLKDAKYVDMTDVQS) is the Q motif element. A Helicase ATP-binding domain is found at 102–277 (IPHALCGRDI…RLSLRDPEYI (176 aa)). 115-122 (ARTGSGKT) serves as a coordination point for ATP. Residues 225-228 (DEAD) carry the DEAD box motif. A Helicase C-terminal domain is found at 303-461 (KLDMLWSFIK…EVSRLLAALL (159 aa)). Residues 643–689 (GAEMRKADIEDKKVDKERRREKRMKQKIKRKRGAMEDEEEEEEEDHD) adopt a coiled-coil conformation. Residues 656–725 (VDKERRREKR…GGKINTDSLS (70 aa)) are disordered. Residues 661-674 (RREKRMKQKIKRKR) show a composition bias toward basic residues. The span at 678 to 688 (EDEEEEEEEDH) shows a compositional bias: acidic residues.

This sequence belongs to the DEAD box helicase family. DDX10/DBP4 subfamily.

The enzyme catalyses ATP + H2O = ADP + phosphate + H(+). The protein is DEAD-box ATP-dependent RNA helicase 32 (RH32) of Arabidopsis thaliana (Mouse-ear cress).